Consider the following 227-residue polypeptide: Guanylate kinase (227 aa).

Residues 21 to 199 form the Guanylate kinase-like domain; it reads GNLFMVVAPS…ALAELECIVA (179 aa). 28-35 serves as a coordination point for ATP; that stretch reads APSGAGKS.

Belongs to the guanylate kinase family.

The protein resides in the cytoplasm. The catalysed reaction is GMP + ATP = GDP + ADP. Essential for recycling GMP and indirectly, cGMP. The protein is Guanylate kinase of Burkholderia mallei (strain ATCC 23344).